The following is a 714-amino-acid chain: Forkhead box protein P2 (714 aa).

Polar residues predominate over residues 1 to 28 (MMQESATETISNSSMNQNGMSTLSSQLD). Disordered regions lie at residues 1–45 (MMQE…SEVS) and 284–338 (KHGG…TGAS). The span at 291–304 (TTNNSSSTTSSTTS) shows a compositional bias: low complexity. Positions 314–323 (SIVNGQSSVL) are enriched in polar residues. Positions 325-336 (ARRDSSSHEETG) are enriched in basic and acidic residues. Residues 345–370 (GVCKWPGCESICEDFGQFLKHLNNEH) form a C2H2-type zinc finger. The leucine-zipper stretch occupies residues 387–408 (VQQLEIQLSKERERLQAMMTHL). Positions 421-425 (PLNLV) are CTBP1-binding. Low complexity predominate over residues 437-458 (TSPQSLPQTPTTPTAPVTPITQ). A disordered region spans residues 437–464 (TSPQSLPQTPTTPTAPVTPITQGPSVIT). The fork-head DNA-binding region spans 503 to 593 (RPPFTYATLI…SQKITGSPTL (91 aa)). Disordered stretches follow at residues 648–667 (LDHIDSNGNSSPGCSPQPHI) and 677–714 (VIAEDEDCPMSLVTTANHSPELEDDREIEEEPLSEDLE). Over residues 698-714 (LEDDREIEEEPLSEDLE) the composition is skewed to acidic residues.

In terms of assembly, forms homodimers and heterodimers with FOXP1 and FOXP4. Dimerization is required for DNA-binding. Interacts with CTBP1. Interacts with FOXP1. Interacts with TBR1. Interacts with ZMYM2.

Its subcellular location is the nucleus. In terms of biological role, transcriptional repressor that may play a role in the specification and differentiation of lung epithelium. May also play a role in developing neural, gastrointestinal and cardiovascular tissues. Can act with CTBP1 to synergistically repress transcription but CTPBP1 is not essential. Plays a role in synapse formation by regulating SRPX2 levels. In Macaca mulatta (Rhesus macaque), this protein is Forkhead box protein P2 (FOXP2).